The following is a 663-amino-acid chain: UvrABC system protein B (663 aa).

Positions 31–271 (DNIEGGEKAQ…EQSISKIQAE (241 aa)) constitute a Helicase ATP-binding domain. 44 to 51 (GATGTGKT) contributes to the ATP binding site. The short motif at 97-120 (YYDYYQPEAYVPSSDTYIEKDSSV) is the Beta-hairpin element. Residues 435–601 (QMDDLLGEIN…TIKKDIRDLI (167 aa)) form the Helicase C-terminal domain. A UVR domain is found at 627–662 (QEAIKQLQKNMQEAAELLDFELAAQLRDLILELKAM).

It belongs to the UvrB family. Forms a heterotetramer with UvrA during the search for lesions. Interacts with UvrC in an incision complex.

Its subcellular location is the cytoplasm. The UvrABC repair system catalyzes the recognition and processing of DNA lesions. A damage recognition complex composed of 2 UvrA and 2 UvrB subunits scans DNA for abnormalities. Upon binding of the UvrA(2)B(2) complex to a putative damaged site, the DNA wraps around one UvrB monomer. DNA wrap is dependent on ATP binding by UvrB and probably causes local melting of the DNA helix, facilitating insertion of UvrB beta-hairpin between the DNA strands. Then UvrB probes one DNA strand for the presence of a lesion. If a lesion is found the UvrA subunits dissociate and the UvrB-DNA preincision complex is formed. This complex is subsequently bound by UvrC and the second UvrB is released. If no lesion is found, the DNA wraps around the other UvrB subunit that will check the other stand for damage. This Streptococcus equi subsp. zooepidemicus (strain H70) protein is UvrABC system protein B.